A 228-amino-acid chain; its full sequence is Cytidylate kinase (228 aa).

11–19 is a binding site for ATP; it reads GPAGTGKSS.

It belongs to the cytidylate kinase family. Type 1 subfamily.

The protein resides in the cytoplasm. The enzyme catalyses CMP + ATP = CDP + ADP. The catalysed reaction is dCMP + ATP = dCDP + ADP. This chain is Cytidylate kinase, found in Mycobacterium avium (strain 104).